The sequence spans 302 residues: Glutaminase (302 aa).

Substrate is bound by residues S61, N111, E155, N162, Y186, Y238, and V256.

The protein belongs to the glutaminase family. In terms of assembly, homotetramer.

It catalyses the reaction L-glutamine + H2O = L-glutamate + NH4(+). The sequence is that of Glutaminase from Pseudomonas aeruginosa (strain LESB58).